A 202-amino-acid chain; its full sequence is LexA repressor (202 aa).

Residues 28-48 (IAEIARAIGVSSPHGVREQLR) constitute a DNA-binding region (H-T-H motif). Residues serine 120 and lysine 157 each act as for autocatalytic cleavage activity in the active site.

Belongs to the peptidase S24 family. In terms of assembly, homodimer.

It catalyses the reaction Hydrolysis of Ala-|-Gly bond in repressor LexA.. In terms of biological role, represses a number of genes involved in the response to DNA damage (SOS response), including recA and lexA. In the presence of single-stranded DNA, RecA interacts with LexA causing an autocatalytic cleavage which disrupts the DNA-binding part of LexA, leading to derepression of the SOS regulon and eventually DNA repair. In Methylococcus capsulatus (strain ATCC 33009 / NCIMB 11132 / Bath), this protein is LexA repressor.